A 58-amino-acid polypeptide reads, in one-letter code: Light-harvesting protein B-875 alpha chain (58 aa).

Residues 1–15 (MSKFYKIWMIFDPRR) lie on the Cytoplasmic side of the membrane. The helical transmembrane segment at 16-36 (VFVAQGVFLFLLAVMIHLILL) threads the bilayer. Residue His-32 coordinates a bacteriochlorophyll. Residues 37–58 (STPSYNWLEISAAKYNRVAVAE) lie on the Periplasmic side of the membrane.

The protein belongs to the antenna complex alpha subunit family. The core complex is formed by different alpha and beta chains, binding bacteriochlorophyll molecules, and arranged most probably in tetrameric structures disposed around the reaction center. The non-pigmented gamma chains may constitute additional components.

Its subcellular location is the cell inner membrane. Functionally, antenna complexes are light-harvesting systems, which transfer the excitation energy to the reaction centers. The protein is Light-harvesting protein B-875 alpha chain (pufA) of Cereibacter sphaeroides (strain ATCC 17023 / DSM 158 / JCM 6121 / CCUG 31486 / LMG 2827 / NBRC 12203 / NCIMB 8253 / ATH 2.4.1.) (Rhodobacter sphaeroides).